The primary structure comprises 144 residues: Large ribosomal subunit protein uL15 (144 aa).

Residues 20-49 are disordered; sequence GRGIGSGLGKTGGRGHKGQKSRSGGFHKVG. Residues 21 to 31 show a composition bias toward gly residues; sequence RGIGSGLGKTG.

This sequence belongs to the universal ribosomal protein uL15 family. As to quaternary structure, part of the 50S ribosomal subunit.

In terms of biological role, binds to the 23S rRNA. This Neisseria gonorrhoeae (strain ATCC 700825 / FA 1090) protein is Large ribosomal subunit protein uL15.